The chain runs to 341 residues: Anthranilate phosphoribosyltransferase (341 aa).

5-phospho-alpha-D-ribose 1-diphosphate contacts are provided by residues G81, 84 to 85 (GD), S89, 91 to 94 (NIST), 109 to 117 (KHGNRSASS), and S121. G81 is an anthranilate binding site. S93 lines the Mg(2+) pocket. Anthranilate is bound at residue N112. Residue R167 participates in anthranilate binding. Positions 225 and 226 each coordinate Mg(2+).

Belongs to the anthranilate phosphoribosyltransferase family. Homodimer. Mg(2+) is required as a cofactor.

The catalysed reaction is N-(5-phospho-beta-D-ribosyl)anthranilate + diphosphate = 5-phospho-alpha-D-ribose 1-diphosphate + anthranilate. Its pathway is amino-acid biosynthesis; L-tryptophan biosynthesis; L-tryptophan from chorismate: step 2/5. Its function is as follows. Catalyzes the transfer of the phosphoribosyl group of 5-phosphorylribose-1-pyrophosphate (PRPP) to anthranilate to yield N-(5'-phosphoribosyl)-anthranilate (PRA). The chain is Anthranilate phosphoribosyltransferase from Nocardioides sp. (strain ATCC BAA-499 / JS614).